The following is a 177-amino-acid chain: Large ribosomal subunit protein uL10 (177 aa).

Belongs to the universal ribosomal protein uL10 family. As to quaternary structure, part of the ribosomal stalk of the 50S ribosomal subunit. The N-terminus interacts with L11 and the large rRNA to form the base of the stalk. The C-terminus forms an elongated spine to which L12 dimers bind in a sequential fashion forming a multimeric L10(L12)X complex.

Its function is as follows. Forms part of the ribosomal stalk, playing a central role in the interaction of the ribosome with GTP-bound translation factors. The polypeptide is Large ribosomal subunit protein uL10 (Leptospira interrogans serogroup Icterohaemorrhagiae serovar copenhageni (strain Fiocruz L1-130)).